A 127-amino-acid chain; its full sequence is Mitochondrial pyruvate carrier 2 (127 aa).

At 2–40 (SAAGARGLRATYHRLLDKVELMLPEKLRPLYNHPAGPRT) the chain is on the mitochondrial matrix side. A helical membrane pass occupies residues 41-61 (VFFWAPIMKWGLVCAGLADMA). Over 62–72 (RPAEKLSTAQS) the chain is Mitochondrial intermembrane. The helical transmembrane segment at 73 to 90 (AVLMATGFIWSRYSLVII) threads the bilayer. The Mitochondrial matrix segment spans residues 91 to 95 (PKNWS). A helical transmembrane segment spans residues 96–115 (LFAVNFFVGAAGASQLFRIW). Topologically, residues 116 to 127 (RYNQELKAKAHK) are mitochondrial intermembrane.

It belongs to the mitochondrial pyruvate carrier (MPC) (TC 2.A.105) family. In terms of assembly, homodimer. Homooligomer. Forms heterodimers with MPC1 and MPC1L. The heterodimer is the more stable and dominant form.

The protein localises to the mitochondrion inner membrane. It catalyses the reaction pyruvate(out) + H(+)(out) = pyruvate(in) + H(+)(in). Its function is as follows. Mediates the uptake of pyruvate into mitochondria. The protein is Mitochondrial pyruvate carrier 2 (MPC2) of Homo sapiens (Human).